Consider the following 264-residue polypeptide: Phosphate import ATP-binding protein PstB (264 aa).

One can recognise an ABC transporter domain in the interval 11 to 250; sequence LKAEALSVYY…DTTEKIFDSP (240 aa). 43 to 50 contacts ATP; sequence GPSGCGKS.

Belongs to the ABC transporter superfamily. Phosphate importer (TC 3.A.1.7) family. The complex is composed of two ATP-binding proteins (PstB), two transmembrane proteins (PstC and PstA) and a solute-binding protein (PstS).

The protein resides in the cell inner membrane. The enzyme catalyses phosphate(out) + ATP + H2O = ADP + 2 phosphate(in) + H(+). In terms of biological role, part of the ABC transporter complex PstSACB involved in phosphate import. Responsible for energy coupling to the transport system. The chain is Phosphate import ATP-binding protein PstB from Synechococcus elongatus (strain ATCC 33912 / PCC 7942 / FACHB-805) (Anacystis nidulans R2).